Here is a 272-residue protein sequence, read N- to C-terminus: 3-methyl-2-oxobutanoate hydroxymethyltransferase (272 aa).

Positions 42 and 86 each coordinate Mg(2+). 3-methyl-2-oxobutanoate-binding positions include 42-43 (DS), Asp-86, and Lys-116. Glu-118 is a Mg(2+) binding site. Glu-185 functions as the Proton acceptor in the catalytic mechanism.

Belongs to the PanB family. As to quaternary structure, homodecamer; pentamer of dimers. It depends on Mg(2+) as a cofactor.

The protein resides in the cytoplasm. It catalyses the reaction 3-methyl-2-oxobutanoate + (6R)-5,10-methylene-5,6,7,8-tetrahydrofolate + H2O = 2-dehydropantoate + (6S)-5,6,7,8-tetrahydrofolate. It functions in the pathway cofactor biosynthesis; (R)-pantothenate biosynthesis; (R)-pantoate from 3-methyl-2-oxobutanoate: step 1/2. Its function is as follows. Catalyzes the reversible reaction in which hydroxymethyl group from 5,10-methylenetetrahydrofolate is transferred onto alpha-ketoisovalerate to form ketopantoate. The protein is 3-methyl-2-oxobutanoate hydroxymethyltransferase of Prochlorococcus marinus (strain NATL1A).